We begin with the raw amino-acid sequence, 72 residues long: Cell division protein ZapB (72 aa).

Positions methionine 1–asparagine 71 form a coiled coil.

It belongs to the ZapB family. In terms of assembly, homodimer. The ends of the coiled-coil dimer bind to each other, forming polymers. Interacts with FtsZ.

It localises to the cytoplasm. Functionally, non-essential, abundant cell division factor that is required for proper Z-ring formation. It is recruited early to the divisome by direct interaction with FtsZ, stimulating Z-ring assembly and thereby promoting cell division earlier in the cell cycle. Its recruitment to the Z-ring requires functional FtsA or ZipA. This chain is Cell division protein ZapB, found in Haemophilus influenzae (strain 86-028NP).